An 833-amino-acid polypeptide reads, in one-letter code: Zinc transporter ZIP10 (833 aa).

Residues 1 to 25 (MKVHIHTKFCLICLLTFIFHHCNHC) form the signal peptide. A compositionally biased stretch (basic and acidic residues) spans 30 to 48 (DHGPEELHRHHRGMTESES). 2 disordered regions span residues 30 to 54 (DHGP…FSVQ) and 137 to 167 (AENH…IKAD). A compositionally biased stretch (polar residues) spans 137–147 (AENHTTTSVTS). The span at 152–167 (KCDPEKEAAELPIKAD) shows a compositional bias: basic and acidic residues. Asn191 and Asn198 each carry an N-linked (GlcNAc...) asparagine glycan. The span at 200 to 209 (SVAHSEHGEP) shows a compositional bias: basic and acidic residues. 2 disordered regions span residues 200–257 (SVAH…NHDH) and 271–335 (RVHS…EDDR). A glycan (N-linked (GlcNAc...) asparagine) is linked at Asn218. A compositionally biased stretch (basic residues) spans 229 to 241 (VKVRRKEKGKRKK). 2 stretches are compositionally biased toward basic and acidic residues: residues 281–315 (HLPE…EAPH) and 326–335 (SHKDQSEDDR). Asn341 carries N-linked (GlcNAc...) asparagine glycosylation. 2 helical membrane passes run 413-433 (IISI…VPII) and 440-460 (FLLT…ALLH). A disordered region spans residues 466 to 485 (QGGHDHSHQHTHGHGHSHGH). Residues 497 to 517 (VLKGLVALGGIYLLFIIEHCI) form a helical membrane-spanning segment. Thr538 and Thr555 each carry phosphothreonine. Ser593 carries the phosphoserine modification. A run of 4 helical transmembrane segments spans residues 689-709 (AIGA…IAVF), 734-754 (IVYN…GTAV), 761-781 (ITLW…LVDM), and 803-823 (FILQ…IALY).

It belongs to the ZIP transporter (TC 2.A.5) family. In terms of assembly, interacts with SLC39A6. This interaction triggers cells to undergo EMT and mitosis. Found in a complex with SLC39A6, SLC39A10 and with the 'Ser-727' phosphorylated form of STAT3 throughout mitosis. Found in a complex with SLC39A6, SLC39A10 and with NCAM1; this complex controls NCAM1 phosphorylation and integration into focal adhesion complexes during epithelial-tomesenchymal transition. Found in a complex with SLC39A6, SLC39A10 and with GSK3B that controls NCAM1 phosphorylation. In terms of processing, undergoes N-terminal ectodomain shedding. As to expression, expressed in the liver, kidney and brain.

The protein resides in the cell membrane. It localises to the apical cell membrane. It catalyses the reaction Zn(2+)(in) = Zn(2+)(out). Its function is as follows. Zinc-influx transporter. When associated with SLC39A6, the heterodimer formed by SLC39A10 and SLC39A6 mediates cellular zinc uptake to trigger cells to undergo epithelial-to-mesenchymal transition (EMT). mediates cellular zinc uptake to trigger cells to undergo epithelial-to-mesenchymal transition (EMT). SLC39A10-SLC39A6 heterodimers play also an essentiel role in initiating mitosis by importing zinc into cells to initiate a pathway resulting in the onset of mitosis. Plays an important for both mature B-cell maintenance and humoral immune responses. When associated with SLC39A10, the heterodimer controls NCAM1 phosphorylation and integration into focal adhesion complexes during EMT. The sequence is that of Zinc transporter ZIP10 from Mus musculus (Mouse).